We begin with the raw amino-acid sequence, 512 residues long: Putative B3 domain-containing protein REM4 (512 aa).

The TF-B3 1 DNA-binding region spans 11-103 (NKAFFIIDLS…VFHVSPFGRS (93 aa)). The disordered stretch occupies residues 111 to 145 (SSSTSDDDDDERTVFDDDEDDDVGDDDDNSISEDD). The segment covering 115-145 (SDDDDDERTVFDDDEDDDVGDDDDNSISEDD) has biased composition (acidic residues). 2 DNA-binding regions (TF-B3) span residues 169 to 265 (YLVA…LCPN) and 307 to 403 (ILTF…CSKV). A disordered region spans residues 408–465 (SSDGHKTADRKPRMTDQAPLAEEQTDNRVEKRAQVTEEGGPSRSTRADPGNLQQKQPC). Composition is skewed to basic and acidic residues over residues 410 to 421 (DGHKTADRKPRM) and 432 to 442 (TDNRVEKRAQV).

The protein resides in the nucleus. This is Putative B3 domain-containing protein REM4 (REM4) from Arabidopsis thaliana (Mouse-ear cress).